Here is a 134-residue protein sequence, read N- to C-terminus: Viral interleukin-8 homolog (134 aa).

An N-terminal signal peptide occupies residues 1–22 (MQALLLVLVLFIVQIYLLPGNG).

Belongs to the intercrine alpha (chemokine CxC) family. Homodimer.

It is found in the secreted. In terms of biological role, plays a role in the early phase of cytolytic infections presumably by recruiting host B or T-lymphocytes. The chain is Viral interleukin-8 homolog (MDV078) from Gallus gallus (Chicken).